The chain runs to 329 residues: MSLNVKLHPSGIIFTSDGTSTILDAALDSNIHIEYSCKDGTCGSCKAILISGEVDSAENTFLTEEDVAKGAILTCCSKAKSDIELDVNYYPELSHIQKKTYPCKLDSIEFVGEDIAILSLRLPPTAKIQYLAGQYIDLIINGQRRSYSIANAPGGNGNIELHVRKVVNGVFSNIIFNELKLQQLLRIEGPQGTFFVREDNLPIVFLAGGTGFAPVKSMVEALINKNDQRQVHIYWGMPAGHNFYSDIANEWAIKHPNIHYVPVVSGDDSTWTGATGFVHQAVLEDIPDLSLFNVYACGSLAMITAARNDFINHGLAENKFFSDAFVPSK.

One can recognise a 2Fe-2S ferredoxin-type domain in the interval 2–93 (SLNVKLHPSG…ELDVNYYPEL (92 aa)). [2Fe-2S] cluster-binding residues include cysteine 37, cysteine 42, cysteine 45, and cysteine 75. Residues 98–197 (KKTYPCKLDS…EGPQGTFFVR (100 aa)) form the FAD-binding FR-type domain.

As to quaternary structure, monomer.

Its pathway is nucleotide-sugar biosynthesis; CDP-ascarylose biosynthesis. It functions in the pathway bacterial outer membrane biogenesis; lipopolysaccharide biosynthesis. Its function is as follows. Participates in the conversion of CDP-6-deoxy-D-glycero-L-threo-4-hexulose to 3,6-dideoxy-D-glycero-D-glycero-4-hexulose together with CDP-6-deoxy-D-glycero-L-threo-4-hexulose-3-dehydrase (E1) in two consecutive steps. The detailed mechanism of E3 is not yet resolved. The polypeptide is CDP-6-deoxy-L-threo-D-glycero-4-hexulose-3-dehydrase reductase (ascD) (Yersinia pseudotuberculosis serotype I (strain IP32953)).